Here is a 234-residue protein sequence, read N- to C-terminus: Dienlactone hydrolase 2 (234 aa).

Active-site residues include Cys-143, Asp-167, and His-199.

It belongs to the dienelactone hydrolase family.

The protein operates within xenobiotic degradation. Its function is as follows. Dienlactone hydrolase; part of the Fusarium detoxification of benzoxazolinone cluster 2 (FDB2) involved in the degradation of benzoxazolinones produced by the host plant. Maize, wheat, and rye produce the 2 benzoxazinone phytoanticipins 2,4-dihy-droxy-7-methoxy-1,4-benzoxazin-3-one (DIMBOA) and 2,4-dihydroxy-1,4-benzoxazin-3-one (DIBOA) that, due to their inherent instability once released, spontaneously degrade to the more stable corresponding benzoxazolinones, 6-methoxy-2-benzoxazolinone (MBOA) and 2-benzoxazolinone (BOA), respectively. The first step in the detoxification of benzoxazolinones involves the hydrolysis of the cyclic ester bond of benzoxazolinones by the FDB1 cluster gamma-lactamase MBL1 to aminophenols. MBL1 is able to convert BOA into 2-aminophenol (2-AP), as well as MBOA into 5-methoxy-2-aminophenol (2-AMP). The FDB2 cluster N-malonyltransferase FDB2/NAT1 then metabolizes aminophenols via N-malonylation to non-toxic malonamic acids. FDB2/NAT1 converts 2-AP into N-(2-hydroxyphenyl) malonamic acid (HPMA) and 2-AMP into N-(2-hydroxy-4-methoxyphenyl) malonamic acid (HMPMA). The duplicated dienlactone hydrolases DLH1 and DLH2 may provide redundant function for hydrolyzing the lactone moiety in the BOA molecule. The roles of the amidases and other enzymes encoded by the 2 FDB clusters have not been identified so far. The polypeptide is Dienlactone hydrolase 2 (Gibberella moniliformis (strain M3125 / FGSC 7600) (Maize ear and stalk rot fungus)).